The sequence spans 3032 residues: MHLHQVLTGAVNPGDNCYSVGSVGDVPFTAYGSGCDIVILASDFECVQIIPGAKHGNIQVSCVECSNQHGRVAASYGNAVCIFEPLGVNSHKRNSQLKCQWLKTGQFFLSSVTYNLAWDPQDNRLLTATDSIQLWAPPGGDILEEEEDVDNRAPPVLNDWKCIWQCKTSVSVHLMEWSPDGEYFATAGKDDCLLKVWYPMTGWKSSIIPQDPHEVKRRRASTQFSFVYLAHPRAVTGFSWRKTSKYMPRGSVCNVLLTSCHDGVCRLWAETLLPEDCLLGEQICETTTSSVASNLSSAGKHKDRIQHALETIHHLKNLRKGQRRSSVLVTHAELMPDKTATHEVHRHISHHANALCHFHIAASINPTTDIPNVLVGTAFNIDDINGGFVVHWLNNKEFHFTSSTEIFMHQLRKLSEKQLDHESDDADREDEERSQDERERGLRMKLDHELSLDRESEAGTGSSEHEDGEREGSPRTHPRPSISMPLPTVLLDRKIETLLTEWNKNPDMLFTIHPVDGTFLVWHVKYLDEYNPGIFRQVQVSFSSRIPVAFPSGDANSLSKNIMMYACVNATKDSYNPSQQEMMSVDSPHGSQLHSPSHSTDMNILAPTVMMVSKHIDGSLNQWAVTFADKSAFTTVLTVSHKFRYCGHRFHLNDLACHSVLPLLLTSSHHNALLTPESDCQWDSDSKVNRLIDPVKHTKASSKQPLRNAATRTFHDPNAIYSELILWRVDPIGPLSYTGGVSELARINSLHTSAFSNVAWLPTLIPSYCLGTYCNSASACFVASDGKNLRLYQAVVDARKLLDELSDPEASKLIGEVFNIVSQQSTARPGCIIELDAITDQCGSNTQLLHVFQEDFIIGYKPHKEDMEKKEKESEIFFQPSQGYRPPPFSEKFFLVVIEKDGNNNSILHMWHLHLKSVQACLAKAAEGISSDSLLSVPGQKNLDSSPETSSSMSSVPHSSSIANLQTASKLILSSRLVYSQPLDLPEAVEVIRATPSAGHLSSSSIYPVCLAPYLVVTTCSDNKVRFWKCCMETNSLGNTSDESETYHWRRWPLMNDEGEDNSSTVSIVGRPVAVSCSYTGRLAVAYKQPIHHNGFISKEFSMHVCIFECESTGGSEWVLEQTIHLDDLVKVGSVLDSRVSVDSNLFVYSKSDAFLSKDRYLIPNIKHLVHLDWVSKEDGSHILTVGVGANIFMYGRLSGIVSDQTNSKDGVAVITLPLGGSIKQGVKSRWVLLRSIDLVSSVDGTPSLPVSLSWVRDGILVVGMDCEMHVYAQWKHSVKFGNVDADSPVEETIQDHSALKSSMLARKSIVEGAAIPDDVFCSPTVVQDGGLFEAAHALSPTLPQYHPTQLLELMDLGKVRRAKAILSHLVKCIAGEVAIVRDPDAGEGTKRHLSRTISVSGSTAKDTVTIGKDGTRDYTEIDSIPPLPLHALLAADQDTSYRISEDSTKKPQSYEDHIESQSEDQYSELFQVQEITTDDIDLEPEKRENKSKVINLSQYGPACFGQEHARVLSSHLMHSSLPGLTRLEQMFLVALADTVATTSTELDENRDKNYSGRDTLDECGLRYLLAMRLHTCLLTSLPPLYRVQLLHQGVSTCHFAWAFHSEAEEELINMIPAIQRGDPQWSELRAMGIGWWVRNVNTLRRCIEKVAKAAFQRNNEALDAALFYLSMKKKAVVWGLFRSQHDEKMTTFFSHNFNEDRWRKAALKNAFSLLGKQRFEQSAAFFLLAGSLKDAIEVCLEKMEDIQLAMVIARLFESEFETSSTYISILNQKILGCQKDGTGFDCKRLHPDPFLRSLAYWVVKDYTRALDTLLEQTPKEDDEQQVIIKSCNPVVFSFYNYLRTHPLLIRRNLASPEGTLATLGLKTEKNIADKINLIERKLFFTTANAHFKVGCPVLALEVLSKIPKVTKISSLTAKKDQLDSVSGRMENGPSESKPVSRSDGGSGADWSAVTSSQFDWSQPMVTVDEEPLRLDWGDDHDGALEEDDGGGLVMKTTDAKKAGQEQSASDPRALLTPQDEECADGDTEVDVIAEQLKFRACLKILMTELRTLATGYEVDGGKLRFQLYNWLEKEIAALHEICNHESVIKEYSSKAHSTVETERLDQEEMVDKPDIGSYERHQIERRRLQAKREHAERRKLWLQKNQDLLRVFLSYCSLHGAQGGGLASVRMELKFLLQESQQETTVKQLQSPLPLPTTLPLLSASIASTKTVIANPVLYLNNHIHDILYTIVQMKTPPHPSVEDVKVHTLHSLAASLSASIYQALCDSHSYSQSEGNQFTGMAYQGLLLSDRRRLRTESIEEHATPNSAPAQWPGVSSLINLLSSAQDEDQPKLNVLLCEAVVAVYLSLLIHALATNSSNELFRLAAHPLNNRMWAAVFGGGVKLVVKPRRQSESIAAPPVASEDMDKHRRRFNMRMLVPGRPVKDATPPPVPAERPSYKEKFIPPELSMWDYFVAKPFLPLSDSGVIYDSDESVHSDDEEDDAFFSDTQIQEHQDPNSYSWALLHLTMVKLALHNIKNFFPIAGLEFSELPVTSPLGIAVIKNLENWEQILQEKMDHFEGPPPNYVNTYPTDLSVGAGPAILRNKAMLEPENTPFKSRDSSALPVKRLWHFLVKQEVLQETFIRYIFTKKRKQSEVEADLGYPGGKAKVIHKESDMIMAFSINKANCNEIVLASTHDVQELDVTSLLACQSYIWIGEEYDRESKSSDDIDYRGSTTTLYQPGAASHSSSQPHPPPSLPWLGSGQTSTGATVLMKRNLHNVKRMTSHPVHQYYLTGAQDGSVRMFEWTRPQQLVCFRQAGNARVTRLYFNSQGNKCGVADGEGFLSIWQVNQTASNPKPYMSWQCHSKATSDFAFITSSSLVATSGHSNDNRNVCLWDTLISPGNSLIHGFTCHDHGATVLQYAPKQQLLISGGRKGYICIFDIRQRQLIHTFQAHDSAIKALALDSCEEYFTTGSAEGNIKVWRLTGHGLIHSFKSEHAKQSIFRNIGAGVMQIAISQDNRLFSCGADGTLKTRVLPSAFNIPNRILDIL.

WD repeat units lie at residues 108 to 145 (FLSSVTYNLAWDPQDNRLLTATDSIQLWAPPGGDILEE), 167 to 207 (KTSV…KSSI), and 230 to 278 (AHPR…EDCL). Ser326 carries the post-translational modification Phosphoserine. Positions 418–486 (QLDHESDDAD…HPRPSISMPL (69 aa)) are disordered. Positions 422 to 434 (ESDDADREDEERS) are enriched in acidic residues. Positions 435–474 (QDERERGLRMKLDHELSLDRESEAGTGSSEHEDGEREGSP) are enriched in basic and acidic residues. A Phosphoserine modification is found at Ser473. The WD 4 repeat unit spans residues 492-532 (DRKIETLLTEWNKNPDMLFTIHPVDGTFLVWHVKYLDEYNP). Residues 577–598 (PSQQEMMSVDSPHGSQLHSPSH) are disordered. Ser587 carries the post-translational modification Phosphoserine. The span at 589 to 598 (HGSQLHSPSH) shows a compositional bias: polar residues. WD repeat units follow at residues 594-633 (HSPSHSTDMNILAPTVMMVSKHIDGSLNQWAVTFADKSAF), 750-802 (LHTS…RKLL), and 879-921 (QPSQ…VQAC). Residues 937–958 (VPGQKNLDSSPETSSSMSSVPH) form a disordered region. Phosphoserine occurs at positions 945 and 946. Residues 945–958 (SSPETSSSMSSVPH) show a composition bias toward low complexity. The WD 8 repeat unit spans residues 1001–1038 (LSSSSIYPVCLAPYLVVTTCSDNKVRFWKCCMETNSLG). 3 positions are modified to phosphoserine: Ser1141, Ser1144, and Ser1152. WD repeat units follow at residues 1164–1205 (PNIK…VSDQ) and 1245–1285 (GTPS…GNVD). Residues Ser1288 and Ser1399 each carry the phosphoserine modification. Phosphothreonine is present on Thr1416. Residues 1443–1464 (RISEDSTKKPQSYEDHIESQSE) form a disordered region. The segment covering 1444–1461 (ISEDSTKKPQSYEDHIES) has biased composition (basic and acidic residues). The residue at position 1856 (Ser1856) is a Phosphoserine. The segment at 1922–1953 (QLDSVSGRMENGPSESKPVSRSDGGSGADWSA) is disordered. Thr2017 carries the phosphothreonine modification. Residues 2117-2146 (GSYERHQIERRRLQAKREHAERRKLWLQKN) are a coiled coil. Ser2394 and Ser2636 each carry phosphoserine. The span at 2722–2732 (QPGAASHSSSQ) shows a compositional bias: low complexity. Positions 2722 to 2744 (QPGAASHSSSQPHPPPSLPWLGS) are disordered. WD repeat units lie at residues 2757-2796 (RNLHNVKRMTSHPVHQYYLTGAQDGSVRMFEWTRPQQLVC), 2800-2839 (AGNARVTRLYFNSQGNKCGVADGEGFLSIWQVNQTASNPK), 2846-2888 (CHSK…GNSL), 2894-2933 (CHDHGATVLQYAPKQQLLISGGRKGYICIFDIRQRQLIHT), 2936-2975 (AHDSAIKALALDSCEEYFTTGSAEGNIKVWRLTGHGLIHS), and 2988-3026 (NIGAGVMQIAISQDNRLFSCGADGTLKTRVLPSAFNIPN).

Interacts with MADD and RAB3GAP. As to expression, expressed in the brain and pituitary gland. Detected in the hippocampus, dentate gyrus, hypothalamus, pyriform cortex and the granular and molecular layers of the cerebellum of adult animals. In the hypothalamus, expression is observed in the arcuate nucleus, the ME, the organum vasculosum of the lamina terminalis, and the subfornical organ, the subcommissural organ, and the suprachiasmatic nucleus. Both tanycytes and hypothalamic neurosecretory neurons express the protein. Expressed in the inner and outer hair cells as well as in the spiral ganglion neurons. Expressed in insulin-secreting cells of the islets of Langerhans in the pancreas.

It localises to the cytoplasmic vesicle. It is found in the secretory vesicle. Its subcellular location is the synaptic vesicle membrane. The protein resides in the neuronal dense core vesicle. In terms of biological role, may serve as a scaffold protein for MADD and RAB3GA on synaptic vesicles of neuronal and endocrine homeostatic processes. Plays a role in the brain as a key controller of neuronal and endocrine homeostatic processes. This Mus musculus (Mouse) protein is DmX-like protein 2 (Dmxl2).